Reading from the N-terminus, the 365-residue chain is Aminomethyltransferase (365 aa).

This sequence belongs to the GcvT family. In terms of assembly, the glycine cleavage system is composed of four proteins: P, T, L and H.

It carries out the reaction N(6)-[(R)-S(8)-aminomethyldihydrolipoyl]-L-lysyl-[protein] + (6S)-5,6,7,8-tetrahydrofolate = N(6)-[(R)-dihydrolipoyl]-L-lysyl-[protein] + (6R)-5,10-methylene-5,6,7,8-tetrahydrofolate + NH4(+). Its function is as follows. The glycine cleavage system catalyzes the degradation of glycine. In Geobacillus thermodenitrificans (strain NG80-2), this protein is Aminomethyltransferase.